Here is a 612-residue protein sequence, read N- to C-terminus: Phosphopentomutase (612 aa).

Ala-2 bears the N-acetylalanine mark. Residues Arg-63 and Ser-165 each coordinate alpha-D-glucose 1,6-bisphosphate. Ser-165 acts as the Phosphoserine intermediate in catalysis. Mg(2+)-binding residues include Ser-165, Asp-322, Asp-324, and Asp-326. The residue at position 165 (Ser-165) is a Phosphoserine. 5 residues coordinate alpha-D-glucose 1,6-bisphosphate: Asp-326, Arg-327, Thr-400, Glu-424, and Lys-438.

Belongs to the phosphohexose mutase family. In terms of assembly, monomer. Requires Mg(2+) as cofactor.

Its subcellular location is the cytoplasm. It is found in the cytosol. It carries out the reaction alpha-D-ribose 1-phosphate = D-ribose 5-phosphate. It catalyses the reaction 2-deoxy-alpha-D-ribose 1-phosphate = 2-deoxy-D-ribose 5-phosphate. The catalysed reaction is alpha-D-glucose 1-phosphate = alpha-D-glucose 6-phosphate. The enzyme catalyses O-phospho-L-seryl-[protein] + alpha-D-glucose 1-phosphate = alpha-D-glucose 1,6-bisphosphate + L-seryl-[protein]. It carries out the reaction alpha-D-glucose 1,6-bisphosphate + L-seryl-[protein] = O-phospho-L-seryl-[protein] + alpha-D-glucose 6-phosphate. Its function is as follows. Catalyzes the conversion of the nucleoside breakdown products ribose-1-phosphate and deoxyribose-1-phosphate to the corresponding 5-phosphopentoses. Catalyzes the reversible isomerization of alpha-D-glucose 1-phosphate to alpha-D-glucose 6-phosphate but with a lower catalytic efficiency. The mechanism proceeds via the intermediate compound alpha-D-glucose 1,6-bisphosphate. In vitro, also has a low glucose 1,6-bisphosphate synthase activity which is most probably not physiologically relevant. The protein is Phosphopentomutase (PGM2) of Pongo abelii (Sumatran orangutan).